We begin with the raw amino-acid sequence, 297 residues long: MANWVFCNRCFQPPHRTSCFSLTNCGHVYCDACLGKGKKNECLICKAPCRTVLLSKHTDADIQAFFMSIDSLCKKYSRETSQILEFQEKHRKRLLAFYREKISRLEESLRKSVLQIEQLQSMRSSQQTAFSTIKSSVSTKPHGCLLPPHSSAPDRLESMEVDLSPSPIRKSEIAAGPARISMISPPQDGRMGPHLTASFCFIPWLTLSKPPVPGECVISRGSPCFCIDVCPHWLLLLAFSSGRHGELTNSKTLPIYAEVQRAVLFPFQQAEGTLDTFRTPAVSVVFPLCQFERKKSF.

An RING-type zinc finger spans residues 7–46; the sequence is CNRCFQPPHRTSCFSLTNCGHVYCDACLGKGKKNECLICK. The stretch at 91–124 forms a coiled coil; that stretch reads RKRLLAFYREKISRLEESLRKSVLQIEQLQSMRS.

The protein localises to the nucleus. It is found in the chromosome. It functions in the pathway protein modification; protein sumoylation. In terms of biological role, SUMO E3 ligase that acts as a regulator of crossing-over during meiosis: required to couple chromosome synapsis to the formation of crossover-specific recombination complexes. Localizes to recombination sites and stabilizes meiosis-specific recombination factors, such as MutS-gamma complex proteins (MSH4 and MSH5) and TEX11. May mediate sumoylation of target proteins MSH4 and/or MSH5, leading to enhance their binding to recombination sites. Acts as a limiting factor for crossover designation and/or reinforcement and plays an antagonist role with CCNB1IP1/HEI10 in the regulation of meiotic recombination. The chain is Probable E3 SUMO-protein ligase RNF212 (RNF212) from Homo sapiens (Human).